The sequence spans 301 residues: 33 kDa chaperonin (301 aa).

2 disulfides stabilise this stretch: C240-C242 and C273-C276.

The protein belongs to the HSP33 family. Post-translationally, under oxidizing conditions two disulfide bonds are formed involving the reactive cysteines. Under reducing conditions zinc is bound to the reactive cysteines and the protein is inactive.

It is found in the cytoplasm. Redox regulated molecular chaperone. Protects both thermally unfolding and oxidatively damaged proteins from irreversible aggregation. Plays an important role in the bacterial defense system toward oxidative stress. The protein is 33 kDa chaperonin of Rippkaea orientalis (strain PCC 8801 / RF-1) (Cyanothece sp. (strain PCC 8801)).